Consider the following 623-residue polypeptide: METQASPKDEVAEAVELELEAVIGFNGHVPTGLKCHPDQEHLVYPLGCTILIQAINTQEQNFLHGHGNNVSCVAISKSGLYIASGQVTFMGFKADIILWDYKKRELMARLSLHKGKIEALAFSPNDMYLVSLGGPDDGSVVVWSIAKREAICGSPAAGLNVGNATTVIFSKCRDEMFVTAGNGTIRVWELDLPNRKIWPTECQTGQMKRIVMSISMANDDSFFYLGTTTGDILKMNPRTKLLADTGPAKDKFSLGVSAICCLKMGGLLVGSGDGLLVFCKSPSYKPIKKIQLQGGITSITLRGEGHQFFVGTEESHIYRVNFTNFKETLITTCHFESVEDIVFPFGTAELFATCAKKDIRVWHTLTNRELLRITVPNMTCHGIDFMRDGKSIISAWDDGRIRAFAPETGRLMYVINNAHRIGVTAIATTSDCKRVISGGGEGEVRVWHIGHQTQKLEEALKEHKSSVSCIRVKKSNEECVTASTDGTCIIWDLVRLRRNQMILANTLFQCVCYHPEEFQIITSGTDRKIAYWEVFDGSVIRELDGSLSGAVNGMDITVEGVHFVTGGNDHLVKVWDYNEGEVTHVGVGHSGNITRIRISPGNQYIVSVSADGAILRWKYPFPS.

WD repeat units follow at residues 65–109 (GHGN…LMAR), 112–153 (LHKG…AICG), 159–198 (LNVG…RKIW), 291–330 (QLQG…ETLI), 333–372 (CHFE…ELLR), 375–414 (VPNM…LMYV), 418–457 (AHRI…QKLE), 462–501 (EHKS…RNQM), 503–544 (LANT…RELD), 546–585 (SLSG…VTHV), and 588–623 (GHSG…PFPS).

Belongs to the CFAP52 family. Microtubule inner protein component of sperm flagellar doublet microtubules. Interacts with BRCA2. Interacts with the CCT chaperonin complex. Interacts with HSP70. Interacts with AK8. Interacts with CFAP45. Interacts with DNAI1. Interacts with IQDC. As to expression, expressed in trachea multiciliated cells.

The protein resides in the cytoplasm. The protein localises to the cytoskeleton. It is found in the cilium axoneme. It localises to the flagellum axoneme. Functionally, microtubule inner protein (MIP) part of the dynein-decorated doublet microtubules (DMTs) in cilia axoneme. Important for proper ciliary and flagellar beating. May act in cooperation with CFAP45 and axonemal dynein subunit DNAH11. May play a role in cell growth and/or survival. This Bos taurus (Bovine) protein is Cilia- and flagella-associated protein 52 (CFAP52).